The sequence spans 284 residues: Proteasome subunit beta 1 (284 aa).

A propeptide spans 1–56 (MASHDSYTGRLPGAFMNPGTSSFTEFLASYNPDLLPGRHMTALAGGMPGNVEAPHA) (removed in mature form; by autocatalysis). Thr-57 serves as the catalytic Nucleophile.

It belongs to the peptidase T1B family. In terms of assembly, the 20S proteasome core is composed of 14 alpha and 14 beta subunits that assemble into four stacked heptameric rings, resulting in a barrel-shaped structure. The two inner rings, each composed of seven catalytic beta subunits, are sandwiched by two outer rings, each composed of seven alpha subunits. The catalytic chamber with the active sites is on the inside of the barrel. Has a gated structure, the ends of the cylinder being occluded by the N-termini of the alpha-subunits. Is capped by the proteasome-associated ATPase, ARC.

The protein resides in the cytoplasm. It catalyses the reaction Cleavage of peptide bonds with very broad specificity.. It participates in protein degradation; proteasomal Pup-dependent pathway. Its activity is regulated as follows. The formation of the proteasomal ATPase ARC-20S proteasome complex, likely via the docking of the C-termini of ARC into the intersubunit pockets in the alpha-rings, may trigger opening of the gate for substrate entry. Interconversion between the open-gate and close-gate conformations leads to a dynamic regulation of the 20S proteasome proteolysis activity. Its function is as follows. Component of the proteasome core, a large protease complex with broad specificity involved in protein degradation. The protein is Proteasome subunit beta 1 of Thermomonospora curvata (strain ATCC 19995 / DSM 43183 / JCM 3096 / KCTC 9072 / NBRC 15933 / NCIMB 10081 / Henssen B9).